A 264-amino-acid chain; its full sequence is Merozoite surface protein 2 (264 aa).

A signal peptide spans 1 to 20 (MKVIKTLSIINFFIFVTFNI). Asparagine 22 and asparagine 36 each carry an N-linked (GlcNAc...) asparagine glycan. A polymorphic region region spans residues 44–190 (ANEGSNTNSV…PQTAENENPA (147 aa)). Residues 46–227 (EGSNTNSVGA…QKECTDGNKE (182 aa)) form a disordered region. A run of 2 repeats spans residues 60-91 (ADTI…TPTA) and 92-123 (ADTI…TPTA). The segment at 60–123 (ADTIASGSQR…GESQTTTPTA (64 aa)) is 2 X 32 AA perfects repeats. Positions 70 to 81 (STNSASTSTTNN) are enriched in low complexity. The segment covering 82–101 (GESQTTTPTAADTIASGSQR) has biased composition (polar residues). Residues 102–145 (STNSASTSTTNNGESQTTTPTAADTPTATESISPSPPITTTESS) are compositionally biased toward low complexity. The segment covering 154 to 166 (TDGKGEESEKQNE) has biased composition (basic and acidic residues). N-linked (GlcNAc...) asparagine glycosylation is present at asparagine 213. Basic and acidic residues predominate over residues 217-226 (SQKECTDGNK). A disulfide bridge links cysteine 221 with cysteine 229. Asparagine 238 carries an N-linked (GlcNAc...) asparagine glycan. Asparagine 238 carries GPI-anchor amidated asparagine lipidation. Residues 239–264 (SSNIASINKFVVLISATLVLSFAIFI) constitute a propeptide, removed in mature form.

The protein resides in the cell membrane. May play a role in the merozoite attachment to the erythrocyte. The sequence is that of Merozoite surface protein 2 from Plasmodium falciparum (isolate FC27 / Papua New Guinea).